Reading from the N-terminus, the 356-residue chain is sn-glycerol-3-phosphate import ATP-binding protein UgpC (356 aa).

Residues 4–235 (LKLQAVTKSW…PASLFVASFI (232 aa)) enclose the ABC transporter domain. 37–44 (GPSGCGKS) contributes to the ATP binding site.

Belongs to the ABC transporter superfamily. sn-glycerol-3-phosphate importer (TC 3.A.1.1.3) family. The complex is composed of two ATP-binding proteins (UgpC), two transmembrane proteins (UgpA and UgpE) and a solute-binding protein (UgpB).

The protein localises to the cell inner membrane. It carries out the reaction sn-glycerol 3-phosphate(out) + ATP + H2O = sn-glycerol 3-phosphate(in) + ADP + phosphate + H(+). In terms of biological role, part of the ABC transporter complex UgpBAEC involved in sn-glycerol-3-phosphate (G3P) import. Responsible for energy coupling to the transport system. The chain is sn-glycerol-3-phosphate import ATP-binding protein UgpC from Escherichia coli O157:H7.